The chain runs to 416 residues: Meiotically up-regulated protein PB1A10.08 (416 aa).

The protein resides in the cytoplasm. In terms of biological role, may have a role in meiosis and sporulation. This chain is Meiotically up-regulated protein PB1A10.08, found in Schizosaccharomyces pombe (strain 972 / ATCC 24843) (Fission yeast).